A 467-amino-acid polypeptide reads, in one-letter code: MLEDRSPDSCLSTRVFSSSRLSESNWSNSYMYPEDDDKLLGNGKRALEVVGEVRQTKSLKLMGFSIIYDSDSSDYSLSGGEEQADAAIGDGSSSRQEQEQQSDFNDNGGDSSDSHSLINEIGRDNSIDCLIRCSRSDYGSIASLNRNFRSLVKSGEIYRLRRQNGFVEHWVYFSCQLLEWVAFDPVERRWMQLPTMPSSVTFMCADKESLAVGTDLLVLGKDDFSSHVIYRYSLLTNSWSSGMKMNSPRCLFGSASLGEIAIFAGGCDSQGKILDFAEMYNSELQTWITLPRMNKPRKMCSGVFMDGKFYVIGGIGGADSKGLTCGEEYDLETKKWTQIPDLSPPRSRADQADMSPAAEAPPLVAVVNNQLYAADHADMEVRKYDKENKKWLTVGRLPERAGSVNGWGLAFRACGERLIVIGGPKCSGGGFIELNSWIPSDGGPPQWTLLDRKHSPTFVYNCAVMGC.

The segment at 77-117 (LSGGEEQADAAIGDGSSSRQEQEQQSDFNDNGGDSSDSHSL) is disordered. Over residues 92 to 111 (SSSRQEQEQQSDFNDNGGDS) the composition is skewed to low complexity. The 48-residue stretch at 116-163 (SLINEIGRDNSIDCLIRCSRSDYGSIASLNRNFRSLVKSGEIYRLRRQ) folds into the F-box domain. Kelch repeat units follow at residues 159-210 (RLRR…KESL), 215-259 (DLLV…SLGE), 261-307 (AIFA…FMDG), 308-356 (KFYV…DMSP), and 365-411 (AVVN…GLAF).

Part of a SCF (ASK-cullin-F-box) protein ligase complex. Interacts with SKP1A/ASK1 and SPK1B/ASK2.

Its subcellular location is the nucleus. It functions in the pathway protein modification; protein ubiquitination. In terms of biological role, component of SCF(ASK-cullin-F-box) E3 ubiquitin ligase complexes, which may mediate the ubiquitination and subsequent proteasomal degradation of target proteins. In Arabidopsis thaliana (Mouse-ear cress), this protein is F-box/kelch-repeat protein SKIP11 (SKIP11).